The sequence spans 342 residues: Anthranilate phosphoribosyltransferase (342 aa).

5-phospho-alpha-D-ribose 1-diphosphate-binding positions include G79, 82–83, T87, 89–92, 107–115, and S119; these read GD, NIST, and KHCNQRISS. G79 serves as a coordination point for anthranilate. S91 lines the Mg(2+) pocket. An anthranilate-binding site is contributed by N110. Position 165 (R165) interacts with anthranilate. 2 residues coordinate Mg(2+): D223 and E224.

This sequence belongs to the anthranilate phosphoribosyltransferase family. As to quaternary structure, homodimer. The cofactor is Mg(2+).

The enzyme catalyses N-(5-phospho-beta-D-ribosyl)anthranilate + diphosphate = 5-phospho-alpha-D-ribose 1-diphosphate + anthranilate. The protein operates within amino-acid biosynthesis; L-tryptophan biosynthesis; L-tryptophan from chorismate: step 2/5. Its function is as follows. Catalyzes the transfer of the phosphoribosyl group of 5-phosphorylribose-1-pyrophosphate (PRPP) to anthranilate to yield N-(5'-phosphoribosyl)-anthranilate (PRA). This chain is Anthranilate phosphoribosyltransferase, found in Buchnera aphidicola subsp. Acyrthosiphon pisum (strain 5A).